Here is a 436-residue protein sequence, read N- to C-terminus: UPF0597 protein YhaM (436 aa).

Belongs to the UPF0597 family.

The chain is UPF0597 protein YhaM from Shigella flexneri serotype 5b (strain 8401).